The chain runs to 577 residues: Arginine--tRNA ligase (577 aa).

A 'HIGH' region motif is present at residues 122–132 (PNVAKEMHVGH).

The protein belongs to the class-I aminoacyl-tRNA synthetase family. Monomer.

It localises to the cytoplasm. It catalyses the reaction tRNA(Arg) + L-arginine + ATP = L-arginyl-tRNA(Arg) + AMP + diphosphate. This Haemophilus influenzae (strain PittGG) protein is Arginine--tRNA ligase.